We begin with the raw amino-acid sequence, 252 residues long: 3-dehydroquinate dehydratase (252 aa).

3-dehydroquinate-binding positions include serine 21, 46 to 48 (EWR), and arginine 82. The active-site Proton donor/acceptor is the histidine 143. Lysine 170 serves as the catalytic Schiff-base intermediate with substrate. Residues arginine 213, serine 232, and glutamine 236 each coordinate 3-dehydroquinate.

The protein belongs to the type-I 3-dehydroquinase family. As to quaternary structure, homodimer.

The catalysed reaction is 3-dehydroquinate = 3-dehydroshikimate + H2O. Its pathway is metabolic intermediate biosynthesis; chorismate biosynthesis; chorismate from D-erythrose 4-phosphate and phosphoenolpyruvate: step 3/7. In terms of biological role, involved in the third step of the chorismate pathway, which leads to the biosynthesis of aromatic amino acids. Catalyzes the cis-dehydration of 3-dehydroquinate (DHQ) and introduces the first double bond of the aromatic ring to yield 3-dehydroshikimate. The sequence is that of 3-dehydroquinate dehydratase from Escherichia coli O6:K15:H31 (strain 536 / UPEC).